The sequence spans 185 residues: MIYETLVLSKTELEQLNVDLPRYSYRFRYSRSIGDTVVEFPGTLSDPCIPVVDVLLGACWAWPQPSRHGGLGLDDIDPFDASFSCCVTSPERYCLSRSVLSGVDAFVVRGSCKLCGLGFLDNFNPFEIRALLGQTTPGLWWQPVKPVYDDRNIHLPYDSELNARIQRFQYTCRECIVRVAFHMSS.

In terms of biological role, transports viral genome to neighboring plant cells directly through plasmosdesmata, without any budding. The movement protein allows efficient cell to cell propagation, by bypassing the host cell wall barrier (Potential). Likely acts as a suppressor of RNA-mediated gene silencing, also known as post-transcriptional gene silencing (PTGS), a mechanism of plant viral defense that performs sequence-specific inhibition of viral mRNAs expression. In Glycine max (Soybean), this protein is Movement protein P1.